The sequence spans 227 residues: UPF0173 metal-dependent hydrolase BCE_4747 (227 aa).

It belongs to the UPF0173 family.

In Bacillus cereus (strain ATCC 10987 / NRS 248), this protein is UPF0173 metal-dependent hydrolase BCE_4747.